Reading from the N-terminus, the 319-residue chain is uncharacterized protein (319 aa).

One can recognise an MPN domain in the interval 29 to 164 (VNISSLALLK…LDAFRSVNPL (136 aa)). His-111, His-113, and Asp-124 together coordinate Zn(2+). Residues 111–124 (HSHPGFGCWLSSVD) carry the JAMM motif motif.

Belongs to the peptidase M67A family.

This is an uncharacterized protein from Caenorhabditis elegans.